The chain runs to 420 residues: Serine hydroxymethyltransferase (420 aa).

Residues L121 and 125 to 127 each bind (6S)-5,6,7,8-tetrahydrofolate; that span reads GHL. N6-(pyridoxal phosphate)lysine is present on K229.

This sequence belongs to the SHMT family. Homodimer. The cofactor is pyridoxal 5'-phosphate.

It localises to the cytoplasm. It catalyses the reaction (6R)-5,10-methylene-5,6,7,8-tetrahydrofolate + glycine + H2O = (6S)-5,6,7,8-tetrahydrofolate + L-serine. It participates in one-carbon metabolism; tetrahydrofolate interconversion. The protein operates within amino-acid biosynthesis; glycine biosynthesis; glycine from L-serine: step 1/1. Its function is as follows. Catalyzes the reversible interconversion of serine and glycine with tetrahydrofolate (THF) serving as the one-carbon carrier. This reaction serves as the major source of one-carbon groups required for the biosynthesis of purines, thymidylate, methionine, and other important biomolecules. Also exhibits THF-independent aldolase activity toward beta-hydroxyamino acids, producing glycine and aldehydes, via a retro-aldol mechanism. This chain is Serine hydroxymethyltransferase, found in Streptomyces coelicolor (strain ATCC BAA-471 / A3(2) / M145).